A 328-amino-acid chain; its full sequence is Olfactory receptor 2AJ1 (328 aa).

The Extracellular portion of the chain corresponds to 1–25 (MGHQNHTFSSDFILLGLFSSSPTSV). N-linked (GlcNAc...) asparagine glycosylation is present at Asn-5. Residues 26 to 49 (VFFLVLFVIFIMSVTENTLMILLI) form a helical membrane-spanning segment. Over 50–57 (RSDSRLHT) the chain is Cytoplasmic. A helical membrane pass occupies residues 58-79 (PMYFLLSHLSLMDILHVSNIVP). Residues 80 to 100 (KMVTNFLSGSRTISFAGCGFQ) are Extracellular-facing. Cysteines 97 and 189 form a disulfide. A helical membrane pass occupies residues 101 to 120 (VFLSLTLLGGECLLLAAMSC). Residues 121-139 (DRYVAICHPLRYPILMKEY) lie on the Cytoplasmic side of the membrane. The helical transmembrane segment at 140–158 (ASALMAGGSWLIGVFNSTV) threads the bilayer. At 159–195 (HTAYALQFPFCGSRAIDHFFCEVPAMLKLSCADTTRY) the chain is on the extracellular side. A helical transmembrane segment spans residues 196-219 (ERGVCVSAVIFLLIPFSLISASYG). The Cytoplasmic segment spans residues 220–236 (QIILTVLQMKSSEARKK). A helical membrane pass occupies residues 237–259 (SFSTCSFHMIVVTMYYGPFIFTY). Residues 260–272 (MRPKSYHTPGQDK) lie on the Extracellular side of the membrane. Residues 273–292 (FLAIFYTILTPTLNPFIYSF) form a helical membrane-spanning segment. Residues 293-328 (RNKDVLAVMKNMLKSNFLHKKMNRKIPECVFCLFLC) lie on the Cytoplasmic side of the membrane.

The protein belongs to the G-protein coupled receptor 1 family.

It is found in the cell membrane. Odorant receptor. The polypeptide is Olfactory receptor 2AJ1 (OR2AJ1) (Homo sapiens (Human)).